Here is a 489-residue protein sequence, read N- to C-terminus: Probable cytochrome P450 522A1 (489 aa).

The chain crosses the membrane as a helical span at residues 1–21; that stretch reads MILTIVIIILTVIFVNKYLLN. A heme-binding site is contributed by C433.

Belongs to the cytochrome P450 family. Requires heme as cofactor.

The protein resides in the membrane. The sequence is that of Probable cytochrome P450 522A1 (cyp522A1) from Dictyostelium discoideum (Social amoeba).